The sequence spans 356 residues: A-type ATP synthase subunit C (356 aa).

This sequence belongs to the V-ATPase V0D/AC39 subunit family. In terms of assembly, has multiple subunits with at least A(3), B(3), C, D, E, F, H, I and proteolipid K(x).

The protein localises to the cell membrane. Its function is as follows. Component of the A-type ATP synthase that produces ATP from ADP in the presence of a proton gradient across the membrane. In Thermoplasma acidophilum (strain ATCC 25905 / DSM 1728 / JCM 9062 / NBRC 15155 / AMRC-C165), this protein is A-type ATP synthase subunit C.